Consider the following 469-residue polypeptide: Aspartyl/glutamyl-tRNA(Asn/Gln) amidotransferase subunit B (469 aa).

This sequence belongs to the GatB/GatE family. GatB subfamily. In terms of assembly, heterotrimer of A, B and C subunits.

The enzyme catalyses L-glutamyl-tRNA(Gln) + L-glutamine + ATP + H2O = L-glutaminyl-tRNA(Gln) + L-glutamate + ADP + phosphate + H(+). The catalysed reaction is L-aspartyl-tRNA(Asn) + L-glutamine + ATP + H2O = L-asparaginyl-tRNA(Asn) + L-glutamate + ADP + phosphate + 2 H(+). In terms of biological role, allows the formation of correctly charged Asn-tRNA(Asn) or Gln-tRNA(Gln) through the transamidation of misacylated Asp-tRNA(Asn) or Glu-tRNA(Gln) in organisms which lack either or both of asparaginyl-tRNA or glutaminyl-tRNA synthetases. The reaction takes place in the presence of glutamine and ATP through an activated phospho-Asp-tRNA(Asn) or phospho-Glu-tRNA(Gln). The sequence is that of Aspartyl/glutamyl-tRNA(Asn/Gln) amidotransferase subunit B from Methanococcus maripaludis (strain C5 / ATCC BAA-1333).